The primary structure comprises 493 residues: Cyclin-dependent kinase-like 2 (493 aa).

A Protein kinase domain is found at 4-287; it reads YENLGLVGEG…CAELLHHDFF (284 aa). ATP contacts are provided by residues 10–18 and K33; that span reads VGEGSYGMV. Residues 45–51 carry the [NKR]KIAxRE motif; it reads KKIAMRE. D126 functions as the Proton acceptor in the catalytic mechanism. 2 disordered regions span residues 311–338 and 363–384; these read VSLS…KTLV and GEKA…SRTS. Residues 320 to 336 show a composition bias toward basic and acidic residues; sequence RKKEKEKDDSLGEERKT.

This sequence belongs to the protein kinase superfamily. CMGC Ser/Thr protein kinase family. CDC2/CDKX subfamily.

The protein localises to the cytoplasm. Its subcellular location is the nucleus. It carries out the reaction L-seryl-[protein] + ATP = O-phospho-L-seryl-[protein] + ADP + H(+). It catalyses the reaction L-threonyl-[protein] + ATP = O-phospho-L-threonyl-[protein] + ADP + H(+). This is Cyclin-dependent kinase-like 2 from Pongo abelii (Sumatran orangutan).